The primary structure comprises 330 residues: Malate dehydrogenase (330 aa).

11–17 contributes to the NAD(+) binding site; that stretch reads GGAGQIA. Substrate is bound by residues Arg92 and Arg98. NAD(+) contacts are provided by residues Asn105, Gln112, and 129–131; that span reads VGN. Residues Asn131 and Arg162 each coordinate substrate. The active-site Proton acceptor is His187.

The protein belongs to the LDH/MDH superfamily. MDH type 2 family.

It catalyses the reaction (S)-malate + NAD(+) = oxaloacetate + NADH + H(+). Functionally, catalyzes the reversible oxidation of malate to oxaloacetate. In Protochlamydia amoebophila (strain UWE25), this protein is Malate dehydrogenase.